The following is a 110-amino-acid chain: Host transcription reprogramming factor 2 (110 aa).

Residues 1 to 18 form the signal peptide; that stretch reads MHLKASSILALLVIGANA. The segment at 68–96 adopts a C2H2-type zinc-finger fold; that stretch reads IMCGYCGKRFWNKPDLEKHIKLKPSKGGH. Positions 88–110 are disordered; it reads KLKPSKGGHKGQPYKEHSWNRPT. Over residues 100–110 the composition is skewed to basic and acidic residues; the sequence is PYKEHSWNRPT.

It is found in the secreted. Its subcellular location is the host nucleus. Secreted effector that translocates into the nuclei of host cells to reprogram the expression of immunity-associated genes by binding to effector binding elements (EBEs) in rice. Binds the 5'-CCACCTCC-3' EBE of promoters from targeted rice genes and probably recruits a yet to be determined host repressor. Causes ambivalent immunity with increased susceptibility to the hemibiotrophic pathogens Magnaporthe oryzae and Xanthomonas oryzae pv. oryzae, but enhances resistance to Cochliobolus miyabeanus, a necrotrophic pathogen. The sequence is that of Host transcription reprogramming factor 2 from Pyricularia oryzae (strain 70-15 / ATCC MYA-4617 / FGSC 8958) (Rice blast fungus).